A 500-amino-acid chain; its full sequence is Maturase K (500 aa).

It belongs to the intron maturase 2 family. MatK subfamily.

Its subcellular location is the plastid. The protein localises to the chloroplast. Usually encoded in the trnK tRNA gene intron. Probably assists in splicing its own and other chloroplast group II introns. In Fragaria vesca (Woodland strawberry), this protein is Maturase K.